A 207-amino-acid chain; its full sequence is Basic helix-loop-helix transcription factor scleraxis (207 aa).

Disordered regions lie at residues 1 to 91 and 151 to 183; these read MSFA…RDRT and AFFHSGRAGSPLPPPPPPPPLARDGGENTQPKQ. Basic and acidic residues predominate over residues 73 to 91; that stretch reads PGREPRQRHTANARERDRT. Residues 78–130 form the bHLH domain; it reads RQRHTANARERDRTNSVNTAFTALRTLIPTEPADRKLSKIETLRLASSYISHL. The span at 161-171 shows a compositional bias: pro residues; it reads PLPPPPPPPPL.

Efficient DNA binding requires dimerization with another bHLH protein. Dimerizes and binds the E-box consensus sequence with E12. Expressed in mesenchymal precursors of cartilage and in connective tissue. Highly expressed in tendons in the limb, tongue and diaphragm and in cartilage of the bronchi.

The protein localises to the nucleus. Functionally, plays an early essential role in mesoderm formation, as well as a later role in formation of somite-derived chondrogenic lineages. The sequence is that of Basic helix-loop-helix transcription factor scleraxis (Scx) from Mus musculus (Mouse).